Consider the following 137-residue polypeptide: Large ribosomal subunit protein uL16 (137 aa).

It belongs to the universal ribosomal protein uL16 family. In terms of assembly, part of the 50S ribosomal subunit.

Its function is as follows. Binds 23S rRNA and is also seen to make contacts with the A and possibly P site tRNAs. The protein is Large ribosomal subunit protein uL16 of Streptococcus equi subsp. zooepidemicus (strain H70).